A 407-amino-acid chain; its full sequence is Subtilisin-like protease CPC735_013710 (407 aa).

A signal peptide spans 1 to 17; it reads MQLLNLSLFFLLPFATA. A propeptide spanning residues 18 to 115 is cleaved from the precursor; that stretch reads NPIPQDSQNI…VLPDQKIYLA (98 aa). The 84-residue stretch at 31-114 folds into the Inhibitor I9 domain; sequence QYIVTLKDGL…SVLPDQKIYL (84 aa). Residues 124–407 form the Peptidase S8 domain; it reads GWNLGYMSSK…VAYNGIQEML (284 aa). N145 carries an N-linked (GlcNAc...) asparagine glycan. Active-site charge relay system residues include D162 and H194. Residues N241, N254, and N341 are each glycosylated (N-linked (GlcNAc...) asparagine). S350 serves as the catalytic Charge relay system. N381 carries an N-linked (GlcNAc...) asparagine glycan.

The protein belongs to the peptidase S8 family.

The protein localises to the secreted. In terms of biological role, secreted subtilisin-like serine protease with keratinolytic activity that contributes to pathogenicity. The polypeptide is Subtilisin-like protease CPC735_013710 (Coccidioides posadasii (strain C735) (Valley fever fungus)).